The following is a 396-amino-acid chain: Alanine racemase (396 aa).

The active-site Proton acceptor; specific for D-alanine is Lys-46. Lys-46 carries the N6-(pyridoxal phosphate)lysine modification. Arg-145 contributes to the substrate binding site. Residue Tyr-280 is the Proton acceptor; specific for L-alanine of the active site. Met-328 contacts substrate.

The protein belongs to the alanine racemase family. The cofactor is pyridoxal 5'-phosphate.

The catalysed reaction is L-alanine = D-alanine. It functions in the pathway amino-acid biosynthesis; D-alanine biosynthesis; D-alanine from L-alanine: step 1/1. In terms of biological role, catalyzes the interconversion of L-alanine and D-alanine. May also act on other amino acids. In Brucella suis (strain ATCC 23445 / NCTC 10510), this protein is Alanine racemase (alr).